The primary structure comprises 486 residues: Cobyric acid synthase (486 aa).

One can recognise a GATase cobBQ-type domain in the interval 251-439; sequence RAKIVVPMLS…VHGLFERGEA (189 aa). The Nucleophile role is filled by C333. Residue H431 is part of the active site.

It belongs to the CobB/CobQ family. CobQ subfamily.

Its pathway is cofactor biosynthesis; adenosylcobalamin biosynthesis. Its function is as follows. Catalyzes amidations at positions B, D, E, and G on adenosylcobyrinic A,C-diamide. NH(2) groups are provided by glutamine, and one molecule of ATP is hydrogenolyzed for each amidation. The protein is Cobyric acid synthase of Caulobacter sp. (strain K31).